The following is an 812-amino-acid chain: Outer membrane usher protein FaeD (812 aa).

An N-terminal signal peptide occupies residues 1-35 (MKKYVTTKSVQPVAFRLTTLSLVMSAVLGSASVIA). The cysteines at positions 793 and 811 are disulfide-linked.

This sequence belongs to the fimbrial export usher family.

The protein localises to the cell outer membrane. Involved in the export and assembly of K88ab fimbrial subunits across the outer membrane. This is Outer membrane usher protein FaeD (faeD) from Escherichia coli.